The sequence spans 507 residues: ATP synthase subunit alpha, mitochondrial (507 aa).

171 to 178 is a binding site for ATP; the sequence is GDRQTGKT.

The protein belongs to the ATPase alpha/beta chains family. In terms of assembly, F-type ATPases have 2 components, CF(1) - the catalytic core - and CF(0) - the membrane proton channel. CF(1) has five subunits: alpha(3), beta(3), gamma(1), delta(1), epsilon(1). CF(0) has three main subunits: a, b and c.

It is found in the mitochondrion. The protein resides in the mitochondrion inner membrane. Its function is as follows. Mitochondrial membrane ATP synthase (F(1)F(0) ATP synthase or Complex V) produces ATP from ADP in the presence of a proton gradient across the membrane which is generated by electron transport complexes of the respiratory chain. F-type ATPases consist of two structural domains, F(1) - containing the extramembraneous catalytic core, and F(0) - containing the membrane proton channel, linked together by a central stalk and a peripheral stalk. During catalysis, ATP synthesis in the catalytic domain of F(1) is coupled via a rotary mechanism of the central stalk subunits to proton translocation. Subunits alpha and beta form the catalytic core in F(1). Rotation of the central stalk against the surrounding alpha(3)beta(3) subunits leads to hydrolysis of ATP in three separate catalytic sites on the beta subunits. Subunit alpha does not bear the catalytic high-affinity ATP-binding sites. This chain is ATP synthase subunit alpha, mitochondrial (ATPA), found in Arabidopsis thaliana (Mouse-ear cress).